The following is a 441-amino-acid chain: ATP-dependent protease ATPase subunit HslU (441 aa).

ATP-binding positions include V18, 60 to 65, D254, E319, and R391; that span reads GVGKTE.

It belongs to the ClpX chaperone family. HslU subfamily. A double ring-shaped homohexamer of HslV is capped on each side by a ring-shaped HslU homohexamer. The assembly of the HslU/HslV complex is dependent on binding of ATP.

It is found in the cytoplasm. Functionally, ATPase subunit of a proteasome-like degradation complex; this subunit has chaperone activity. The binding of ATP and its subsequent hydrolysis by HslU are essential for unfolding of protein substrates subsequently hydrolyzed by HslV. HslU recognizes the N-terminal part of its protein substrates and unfolds these before they are guided to HslV for hydrolysis. In Verminephrobacter eiseniae (strain EF01-2), this protein is ATP-dependent protease ATPase subunit HslU.